We begin with the raw amino-acid sequence, 620 residues long: Translocator protein BipB (620 aa).

The tract at residues 58–95 is disordered; it reads QCDAQPAAHDARLDDRPALRAPQERDAPPLGASDTGSR. Residues 66 to 84 show a composition bias toward basic and acidic residues; that stretch reads HDARLDDRPALRAPQERDA. Residues 309–339 are a coiled coil; the sequence is EMQAKREAELQKKSDEYQAQVKKAEEMQKTM. Transmembrane regions (helical) follow at residues 355–375, 401–421, and 430–450; these read FAAA…GLAL, AILK…LVAC, and LAGA…AAFV.

This sequence belongs to the SctE/SipB/YopB family.

It is found in the secreted. Its subcellular location is the host membrane. Plays a role in the bacterium-induced formation of multinucleated giant cell (MNGC), which is formed after host cell fusion, as well as in the intercellular spreading of bacteria and in the induction of apoptosis in macrophages. May act in concert with other effector proteins to induce fusion of host cell membranes. The sequence is that of Translocator protein BipB (bipB) from Burkholderia mallei (strain NCTC 10247).